The sequence spans 416 residues: Enolase (416 aa).

Gln-156 contributes to the (2R)-2-phosphoglycerate binding site. The Proton donor role is filled by Glu-200. 3 residues coordinate Mg(2+): Asp-236, Glu-281, and Asp-308. Residues Lys-333, Arg-362, Ser-363, and Lys-384 each coordinate (2R)-2-phosphoglycerate. The active-site Proton acceptor is Lys-333.

It belongs to the enolase family. Mg(2+) is required as a cofactor.

It is found in the cytoplasm. The protein localises to the secreted. It localises to the cell surface. It carries out the reaction (2R)-2-phosphoglycerate = phosphoenolpyruvate + H2O. The protein operates within carbohydrate degradation; glycolysis; pyruvate from D-glyceraldehyde 3-phosphate: step 4/5. Catalyzes the reversible conversion of 2-phosphoglycerate (2-PG) into phosphoenolpyruvate (PEP). It is essential for the degradation of carbohydrates via glycolysis. This Methanothermobacter thermautotrophicus (strain ATCC 29096 / DSM 1053 / JCM 10044 / NBRC 100330 / Delta H) (Methanobacterium thermoautotrophicum) protein is Enolase.